The primary structure comprises 291 residues: Nucleotide-binding protein Ccel_2290 (291 aa).

Residue 8-15 (GMSGAGKS) coordinates ATP. 59–62 (DIRG) contributes to the GTP binding site.

The protein belongs to the RapZ-like family.

Its function is as follows. Displays ATPase and GTPase activities. This is Nucleotide-binding protein Ccel_2290 from Ruminiclostridium cellulolyticum (strain ATCC 35319 / DSM 5812 / JCM 6584 / H10) (Clostridium cellulolyticum).